A 362-amino-acid chain; its full sequence is Adenosine deaminase (362 aa).

Positions 19 and 21 each coordinate Zn(2+). The substrate site is built by His-21, Asp-23, and Gly-181. His-208 is a binding site for Zn(2+). Residue Glu-211 is the Proton donor of the active site. Asp-300 provides a ligand contact to Zn(2+).

This sequence belongs to the metallo-dependent hydrolases superfamily. Adenosine and AMP deaminases family. Adenosine deaminase subfamily. Zn(2+) serves as cofactor.

It catalyses the reaction adenosine + H2O + H(+) = inosine + NH4(+). The catalysed reaction is 2'-deoxyadenosine + H2O + H(+) = 2'-deoxyinosine + NH4(+). Functionally, catalyzes the hydrolytic deamination of adenosine and 2-deoxyadenosine. The sequence is that of Adenosine deaminase from Mycolicibacterium vanbaalenii (strain DSM 7251 / JCM 13017 / BCRC 16820 / KCTC 9966 / NRRL B-24157 / PYR-1) (Mycobacterium vanbaalenii).